The chain runs to 372 residues: Peptidyl-prolyl cis-trans isomerase D (372 aa).

Residues 9–175 (FFDISIGGKP…KEVKIEDCGV (167 aa)) form the PPIase cyclophilin-type domain. TPR repeat units lie at residues 220–253 (VEAV…LKQY), 271–304 (VSLF…DNTD), and 309–342 (AKAL…QPHD).

Belongs to the cyclophilin-type PPIase family. PPIase D subfamily.

The protein resides in the cytoplasm. The catalysed reaction is [protein]-peptidylproline (omega=180) = [protein]-peptidylproline (omega=0). Its function is as follows. PPIases accelerate the folding of proteins. It catalyzes the cis-trans isomerization of proline imidic peptide bonds in oligopeptides. This Kluyveromyces lactis (strain ATCC 8585 / CBS 2359 / DSM 70799 / NBRC 1267 / NRRL Y-1140 / WM37) (Yeast) protein is Peptidyl-prolyl cis-trans isomerase D (CPR6).